A 405-amino-acid polypeptide reads, in one-letter code: NADH-quinone oxidoreductase subunit D (405 aa).

This sequence belongs to the complex I 49 kDa subunit family. In terms of assembly, NDH-1 is composed of 14 different subunits. Subunits NuoB, C, D, E, F, and G constitute the peripheral sector of the complex.

The protein resides in the cell inner membrane. It catalyses the reaction a quinone + NADH + 5 H(+)(in) = a quinol + NAD(+) + 4 H(+)(out). In terms of biological role, NDH-1 shuttles electrons from NADH, via FMN and iron-sulfur (Fe-S) centers, to quinones in the respiratory chain. The immediate electron acceptor for the enzyme in this species is believed to be ubiquinone. Couples the redox reaction to proton translocation (for every two electrons transferred, four hydrogen ions are translocated across the cytoplasmic membrane), and thus conserves the redox energy in a proton gradient. The chain is NADH-quinone oxidoreductase subunit D from Leptospira interrogans serogroup Icterohaemorrhagiae serovar copenhageni (strain Fiocruz L1-130).